The following is a 119-amino-acid chain: Gas vesicle protein O1 (119 aa).

A compositionally biased stretch (basic and acidic residues) spans 1-12 (MADPANDRSERE). Residues 1–48 (MADPANDRSEREEGGEDDETPPASDGNPSPSANSFTLSNAQTRAREAA) are disordered. The span at 26–42 (GNPSPSANSFTLSNAQT) shows a compositional bias: polar residues.

The protein belongs to the gas vesicle GvpO family. Forms homodimers, forms a GvpN1-GvpO1 heterodimer, interacts with GvpC1 (via the latter's C-terminus), GvpF1, GvpI1 and GvpL1, might interact with GvpA1.

It is found in the gas vesicle. The protein resides in the cytoplasm. Functionally, a minor component of the gas vesicle, also found in soluble extracts. May play a role in transcription and/or RNA stability and in GV assembly. Gas vesicles are hollow, gas filled proteinaceous nanostructures found in several microbial planktonic microorganisms. They allow positioning of halobacteria at the optimal depth for growth in the poorly aerated, shallow brine pools of their habitat. Expression of a 9.5 kb p-vac DNA fragment containing 2 divergently transcribed regions (gvpD-gvpE-gvpF-gvpG-gvpH-gvpI-gvpJ-gvpK-gvpL-gvpM and gvpA-gvpC-gvpN-gvpO) allows H.volcanii to produce gas vesicles. A minimal gas vesicle can be made in H.volcanii by gvpA1-gvpO1 gvpF1-gvpG1-gvpJ1-gvpK1-gvpL1-gvpM1; lack of enough GvpJ1 prevents formation. The same region restores gas vesicle production in H.halobium without the p-vac locus, but it still has the c-vac locus. The sequence is that of Gas vesicle protein O1 from Halobacterium salinarum (strain ATCC 700922 / JCM 11081 / NRC-1) (Halobacterium halobium).